A 249-amino-acid chain; its full sequence is Uridylate kinase (249 aa).

Residue 22-25 (KISG) participates in ATP binding. Residues 30 to 35 (GTQGFG) are involved in allosteric activation by GTP. A UMP-binding site is contributed by Gly-64. Residues Gly-65 and Arg-69 each contribute to the ATP site. UMP-binding positions include Asp-84 and 145-152 (TGNPYFTT). Residues Asn-173, Tyr-179, and Asp-182 each coordinate ATP.

This sequence belongs to the UMP kinase family. In terms of assembly, homohexamer.

It localises to the cytoplasm. The catalysed reaction is UMP + ATP = UDP + ADP. It participates in pyrimidine metabolism; CTP biosynthesis via de novo pathway; UDP from UMP (UMPK route): step 1/1. With respect to regulation, allosterically activated by GTP. Inhibited by UTP. Its function is as follows. Catalyzes the reversible phosphorylation of UMP to UDP. This Ruegeria sp. (strain TM1040) (Silicibacter sp.) protein is Uridylate kinase.